A 209-amino-acid chain; its full sequence is MKILIASSHGYKVRETKAFLKKLGEFDIFSLVDYPSYQPPKETGETPEENAIQKGLFAAQTFRCWTIADDSMLIIPALGGLPGKLSASFAGEQANDKDHRKKLLENMRLLENTIDRSAYFECCVALISPFGKIFKAHASCEGTIAFEERGSSGFGYDPLFVKHDYKQTYAELPEAIKNQVSHRAKALVKLQPYVETVLANHLLAGKESL.

Residue 7-12 coordinates substrate; the sequence is SSHGYK. D70 (proton acceptor) is an active-site residue. Position 70 (D70) interacts with Mg(2+). Substrate contacts are provided by residues S71, 154 to 157, K177, and 182 to 183; these read FGYD and HR.

The protein belongs to the HAM1 NTPase family. Homodimer. Requires Mg(2+) as cofactor.

It catalyses the reaction XTP + H2O = XMP + diphosphate + H(+). The catalysed reaction is dITP + H2O = dIMP + diphosphate + H(+). It carries out the reaction ITP + H2O = IMP + diphosphate + H(+). Pyrophosphatase that catalyzes the hydrolysis of nucleoside triphosphates to their monophosphate derivatives, with a high preference for the non-canonical purine nucleotides XTP (xanthosine triphosphate), dITP (deoxyinosine triphosphate) and ITP. Seems to function as a house-cleaning enzyme that removes non-canonical purine nucleotides from the nucleotide pool, thus preventing their incorporation into DNA/RNA and avoiding chromosomal lesions. This chain is dITP/XTP pyrophosphatase, found in Chlamydia trachomatis serovar L2 (strain ATCC VR-902B / DSM 19102 / 434/Bu).